The primary structure comprises 294 residues: Putative S-adenosyl-L-methionine-dependent methyltransferase RHA1_ro00605 (294 aa).

S-adenosyl-L-methionine contacts are provided by residues D120 and 149–150 (DL).

The protein belongs to the UPF0677 family.

Exhibits S-adenosyl-L-methionine-dependent methyltransferase activity. This Rhodococcus jostii (strain RHA1) protein is Putative S-adenosyl-L-methionine-dependent methyltransferase RHA1_ro00605.